We begin with the raw amino-acid sequence, 429 residues long: UDP-N-acetylglucosamine 1-carboxyvinyltransferase (429 aa).

Position 22-23 (22-23 (KN)) interacts with phosphoenolpyruvate. Arginine 102 is a binding site for UDP-N-acetyl-alpha-D-glucosamine. The active-site Proton donor is cysteine 126. Cysteine 126 carries the 2-(S-cysteinyl)pyruvic acid O-phosphothioketal modification. UDP-N-acetyl-alpha-D-glucosamine contacts are provided by residues 131-135 (RPVDL), aspartate 316, and isoleucine 338.

It belongs to the EPSP synthase family. MurA subfamily.

The protein localises to the cytoplasm. The catalysed reaction is phosphoenolpyruvate + UDP-N-acetyl-alpha-D-glucosamine = UDP-N-acetyl-3-O-(1-carboxyvinyl)-alpha-D-glucosamine + phosphate. It participates in cell wall biogenesis; peptidoglycan biosynthesis. In terms of biological role, cell wall formation. Adds enolpyruvyl to UDP-N-acetylglucosamine. The polypeptide is UDP-N-acetylglucosamine 1-carboxyvinyltransferase (Methylorubrum extorquens (strain CM4 / NCIMB 13688) (Methylobacterium extorquens)).